We begin with the raw amino-acid sequence, 113 residues long: Class I hydrophobin fvh1 (113 aa).

An N-terminal signal peptide occupies residues 1-20 (MVSFRAFTVAASLFATLAAA). Cystine bridges form between C34–C94, C41–C88, C42–C75, and C95–C108. N35 is a glycosylation site (N-linked (GlcNAc...) asparagine). N97 carries N-linked (GlcNAc...) asparagine glycosylation.

The protein belongs to the fungal hydrophobin family. As to quaternary structure, self-assembles to form functional amyloid fibrils called rodlets. Self-assembly into fibrillar rodlets occurs spontaneously at hydrophobic:hydrophilic interfaces and the rodlets further associate laterally to form amphipathic monolayers.

Its subcellular location is the secreted. The protein localises to the cell wall. Its function is as follows. Aerial growth, conidiation, and dispersal of filamentous fungi in the environment rely upon a capability of their secreting small amphipathic proteins called hydrophobins (HPBs) with low sequence identity. Class I can self-assemble into an outermost layer of rodlet bundles on aerial cell surfaces, conferring cellular hydrophobicity that supports fungal growth, development and dispersal; whereas Class II form highly ordered films at water-air interfaces through intermolecular interactions but contribute nothing to the rodlet structure. Fvh1 is a class I hydrophobin involved in fruiting body initiation. This chain is Class I hydrophobin fvh1, found in Flammulina velutipes (Agaricus velutipes).